Here is a 296-residue protein sequence, read N- to C-terminus: Glycine N-acyltransferase (296 aa).

K16, K127, and K141 each carry N6-acetyllysine; alternate. K16, K127, and K141 each carry N6-succinyllysine; alternate. K159 is modified (N6-acetyllysine). K169 is subject to N6-succinyllysine. K183 and K256 each carry N6-acetyllysine; alternate. N6-succinyllysine; alternate occurs at positions 183 and 256.

This sequence belongs to the glycine N-acyltransferase family. As to expression, predominantly expressed in liver (at protein level) and kidney. Down-regulated in hepatocellular carcinoma and other liver cancers.

It is found in the mitochondrion. The enzyme catalyses an acyl-CoA + glycine = an N-acylglycine + CoA + H(+). It catalyses the reaction benzoyl-CoA + glycine = N-benzoylglycine + CoA + H(+). Mitochondrial acyltransferase which transfers an acyl group to the N-terminus of glycine and glutamine, although much less efficiently. Can conjugate numerous substrates to form a variety of N-acylglycines, with a preference for benzoyl-CoA over phenylacetyl-CoA as acyl donors. Thereby detoxify xenobiotics, such as benzoic acid or salicylic acid, and endogenous organic acids, such as isovaleric acid. In Homo sapiens (Human), this protein is Glycine N-acyltransferase (GLYAT).